The chain runs to 362 residues: Putative transport protein BB_0006 (362 aa).

Transmembrane regions (helical) follow at residues 20–40, 43–63, 68–88, 144–164, 212–232, 234–254, 265–285, and 304–326; these read FYCI…EAVF, LAIS…LARF, FLIV…IFSF, EIIG…FLLS, ILVF…WAVL, FVFN…IVIT, IVLY…NILE, and LFFW…TVIV.

Belongs to the autoinducer-2 exporter (AI-2E) (TC 2.A.86) family.

It localises to the cell membrane. In Borreliella burgdorferi (strain ATCC 35210 / DSM 4680 / CIP 102532 / B31) (Borrelia burgdorferi), this protein is Putative transport protein BB_0006.